We begin with the raw amino-acid sequence, 251 residues long: Triosephosphate isomerase (251 aa).

2 residues coordinate substrate: N12 and K14. Residue H96 is the Electrophile of the active site. The active-site Proton acceptor is the E168.

Belongs to the triosephosphate isomerase family. Homodimer.

The protein localises to the cytoplasm. Its subcellular location is the glycosome. The catalysed reaction is D-glyceraldehyde 3-phosphate = dihydroxyacetone phosphate. It participates in carbohydrate biosynthesis; gluconeogenesis. The protein operates within carbohydrate degradation; glycolysis; D-glyceraldehyde 3-phosphate from glycerone phosphate: step 1/1. The polypeptide is Triosephosphate isomerase (Leishmania mexicana).